A 503-amino-acid chain; its full sequence is Maturase K (503 aa).

This sequence belongs to the intron maturase 2 family. MatK subfamily.

It localises to the plastid. The protein localises to the chloroplast. Functionally, usually encoded in the trnK tRNA gene intron. Probably assists in splicing its own and other chloroplast group II introns. The sequence is that of Maturase K from Rosa acicularis (Prickly rose).